A 260-amino-acid polypeptide reads, in one-letter code: 14-3-3 protein 3 (260 aa).

It belongs to the 14-3-3 family. In terms of assembly, homodimer.

The sequence is that of 14-3-3 protein 3 (TFT3) from Solanum lycopersicum (Tomato).